The sequence spans 1674 residues: E3 ubiquitin-protein ligase SHPRH (1674 aa).

The tract at residues 1–26 is disordered; that stretch reads MSSRRKRAPPMKVDEERQQQLHWNMH. A compositionally biased stretch (basic and acidic residues) spans 12-26; the sequence is KVDEERQQQLHWNMH. Residues Ser-259 and Ser-261 each carry the phosphoserine modification. The region spanning 302–384 is the Helicase ATP-binding; first part domain; sequence YQREAVNWML…TVEVLALILT (83 aa). 368 to 375 is a binding site for ATP; sequence DEMGLGKT. The H15 domain occupies 433–507; sequence HCPPTRVMIL…GFSGTFTLGK (75 aa). The disordered stretch occupies residues 524 to 548; that stretch reads SPRKIEKELRKSVNKDADSEYLPSN. The segment covering 526 to 541 has biased composition (basic and acidic residues); sequence RKIEKELRKSVNKDAD. Ser-626 carries the post-translational modification Phosphoserine. A PHD-type zinc finger spans residues 649–700; it reads RFECICGEFDQIGHKPRVQCLKCHLWQHAKCVNYEEKNLKVKPFYCPHCLVA. The Helicase ATP-binding; second part domain maps to 701–859; that stretch reads MEPVSTRATL…FGLVVFLGIE (159 aa). Residues 810–813 carry the DEAQ box motif; that stretch reads DEAQ. An RING-type zinc finger spans residues 1423–1470; that stretch reads CPICARQLGKQWAVLTCGHCFCNECTSIIIEQYSVGSHRSSIKCAICR. The Helicase C-terminal domain maps to 1505–1663; the sequence is AVVRTLMKIQ…ASVLTVAGLA (159 aa).

The protein belongs to the SNF2/RAD54 helicase family. Homodimer. Interacts with HLTF, PCNA, UBE2N and RAD18. As to expression, broadly expressed (at protein level).

The enzyme catalyses S-ubiquitinyl-[E2 ubiquitin-conjugating enzyme]-L-cysteine + [acceptor protein]-L-lysine = [E2 ubiquitin-conjugating enzyme]-L-cysteine + N(6)-ubiquitinyl-[acceptor protein]-L-lysine.. It functions in the pathway protein modification; protein ubiquitination. E3 ubiquitin-protein ligase involved in DNA repair. Upon genotoxic stress, accepts ubiquitin from the UBE2N-UBE2V2 E2 complex and transfers it to 'Lys-164' of PCNA which had been monoubiquitinated by UBE2A/B-RAD18, promoting the formation of non-canonical poly-ubiquitin chains linked through 'Lys-63'. The sequence is that of E3 ubiquitin-protein ligase SHPRH (Shprh) from Mus musculus (Mouse).